The chain runs to 68 residues: MKAIISLLLISAMVFSMIEAVPLEEGLQLFEGERGCLPHNRFCNALSGPRCCSGLTCKELNIWASKCL.

The first 20 residues, 1-20, serve as a signal peptide directing secretion; sequence MKAIISLLLISAMVFSMIEA. Residues 21 to 34 constitute a propeptide that is removed on maturation; it reads VPLEEGLQLFEGER. 3 cysteine pairs are disulfide-bonded: Cys36-Cys52, Cys43-Cys57, and Cys51-Cys67.

Belongs to the neurotoxin 01 (U2-agtx) family. Expressed by the venom gland.

It localises to the secreted. Insect active toxin causing rapid but reversible paralysis in crickets. No activity shown in mammals. Does not show effect on mammalian voltage-gated calcium channels. The chain is U2-agatoxin-Ao1u from Agelena orientalis (Funnel-web spider).